Reading from the N-terminus, the 71-residue chain is Protein CYSTEINE-RICH TRANSMEMBRANE MODULE 3 (71 aa).

Positions 30–49 (VMMKDSPQTVQPPHEGQSKG) are disordered. Residues 48–64 (KGSGGFLRGCLAAMCCC) traverse the membrane as a helical segment.

It belongs to the CYSTM1 family. As to quaternary structure, heterodimers. Interacts with CYSTM7 and WIH1/CYSTM13. Mostly expressed in leaves and flowers and, to a lower extent, in stems, siliques, shoots and roots.

The protein resides in the cell membrane. It localises to the cytoplasm. The protein localises to the mitochondrion. Its function is as follows. Negatively regulates salt stress responses and Na(+) homeostasis. Prevents Na(+) efflux, disturbs reactive oxygen species (ROS) homeostasis, and represses the expression of nuclear salt stress-responsive genes. Involved in resistance to abiotic stress. This chain is Protein CYSTEINE-RICH TRANSMEMBRANE MODULE 3, found in Arabidopsis thaliana (Mouse-ear cress).